Consider the following 950-residue polypeptide: Translation initiation factor IF-2 (950 aa).

Basic and acidic residues-rich tracts occupy residues 128 to 156 (KPKV…KVEA), 165 to 186 (AEVK…EKKK), 200 to 234 (KRAE…DNRR), and 291 to 312 (NRRD…DGNR). Residues 128 to 352 (KPKVAEPVKK…YQNNQSSNVP (225 aa)) are disordered. 2 stretches are compositionally biased toward polar residues: residues 322 to 336 (NRNQ…NWNQ) and 343 to 352 (YQNNQSSNVP). Positions 448-619 (ERPAVVTIMG…LLVAEVQELK (172 aa)) constitute a tr-type G domain. Residues 457–464 (GHVDHGKT) form a G1 region. Residue 457-464 (GHVDHGKT) coordinates GTP. The G2 stretch occupies residues 482–486 (GITQH). A G3 region spans residues 503-506 (DTPG). Residues 503 to 507 (DTPGH) and 557 to 560 (NKLD) contribute to the GTP site. Residues 557–560 (NKLD) form a G4 region. The interval 595–597 (SAK) is G5.

Belongs to the TRAFAC class translation factor GTPase superfamily. Classic translation factor GTPase family. IF-2 subfamily.

It is found in the cytoplasm. Functionally, one of the essential components for the initiation of protein synthesis. Protects formylmethionyl-tRNA from spontaneous hydrolysis and promotes its binding to the 30S ribosomal subunits. Also involved in the hydrolysis of GTP during the formation of the 70S ribosomal complex. The chain is Translation initiation factor IF-2 (infB) from Lactococcus lactis subsp. cremoris (Streptococcus cremoris).